The following is a 123-amino-acid chain: Small ribosomal subunit protein uS12cz/uS12cy (123 aa).

It belongs to the universal ribosomal protein uS12 family. In terms of assembly, part of the 30S ribosomal subunit.

It localises to the plastid. The protein resides in the chloroplast. In terms of biological role, with S4 and S5 plays an important role in translational accuracy. Located at the interface of the 30S and 50S subunits. The protein is Small ribosomal subunit protein uS12cz/uS12cy (rps12-A) of Daucus carota (Wild carrot).